A 391-amino-acid chain; its full sequence is SSTETPPSYNQLNYNENLLRFFNSKPVTAPVELDPPKVESSYVSSARGEDARSTLSPVQGFEGSGGSGSSGNFTTGSNLHMSSVTNTSNAGTGTSGTGNSGDGGGGGGADGPGSGAAPPVTLTESLLNKHNDEMEKFMLKKHRESRGRSGEKNKKSANDAMKMLEYSGPGPGHGHGIKRGGSHSWEGEANKPKQQLTLNTGGGGGGMPPFLDIQHTSSSTQNKGLAGVGVGGAGGGVVGVGSSAGGNGSGTGNNNGNGNNNQPTTNQFTQSGLSCTQNINLWPPFSVGITTPTSVLSSHTAVAQSSFSPQHSLFPTFYYIPASIAASSPSGTSPNPNRPHKHAHVHSSSEKPSTSQAAAATMPLQYMTGVMYPHPSLFYTHPAAAAATAMV.

Disordered regions lie at residues 27–121, 163–188, 241–270, and 328–357; these read VTAP…PPVT, MLEY…WEGE, GSSA…QFTQ, and SPSG…TSQA. The span at 93–114 shows a compositional bias: gly residues; it reads GTSGTGNSGDGGGGGGADGPGS. Residues 241–255 show a composition bias toward gly residues; it reads GSSAGGNGSGTGNNN.

As to quaternary structure, forms a heterodimer with timeless (TIM); the complex then translocates into the nucleus. Phosphorylated with a circadian rhythmicity, probably by the double-time protein (dbt). Phosphorylation could be implicated in the stability of per monomer and in the formation of heterodimer per-tim.

It is found in the nucleus. The protein resides in the cytoplasm. It localises to the perinuclear region. Functionally, essential for biological clock functions. Determines the period length of circadian and ultradian rhythms; an increase in PER dosage leads to shortened circadian rhythms and a decrease leads to lengthened circadian rhythms. Essential for the circadian rhythmicity of locomotor activity, eclosion behavior, and for the rhythmic component of the male courtship song that originates in the thoracic nervous system. The biological cycle depends on the rhythmic formation and nuclear localization of the TIM-PER complex. Light induces the degradation of TIM, which promotes elimination of PER. Nuclear activity of the heterodimer coordinatively regulates PER and TIM transcription through a negative feedback loop. Behaves as a negative element in circadian transcriptional loop. Does not appear to bind DNA, suggesting indirect transcriptional inhibition. The chain is Period circadian protein (per) from Drosophila insularis (Fruit fly).